Here is a 132-residue protein sequence, read N- to C-terminus: Interleukin-4 (132 aa).

The first 24 residues, 1 to 24 (MGLTSQLIPTLVCLLALTSTFVHG), serve as a signal peptide directing secretion. N-linked (GlcNAc...) asparagine glycans are attached at residues asparagine 28, asparagine 45, asparagine 62, asparagine 83, asparagine 95, and asparagine 101. Cystine bridges form between cysteine 48–cysteine 84 and cysteine 70–cysteine 104.

The protein belongs to the IL-4/IL-13 family.

Its subcellular location is the secreted. Participates in at least several B-cell activation processes as well as of other cell types. It is a costimulator of DNA-synthesis. It induces the expression of class II MHC molecules on resting B-cells. It enhances both secretion and cell surface expression of IgE and IgG1. It also regulates the expression of the low affinity Fc receptor for IgE (CD23) on both lymphocytes and monocytes. Positively regulates IL31RA expression in macrophages. Stimulates autophagy in dendritic cells by interfering with mTORC1 signaling and through the induction of RUFY4. The chain is Interleukin-4 (IL4) from Canis lupus familiaris (Dog).